A 382-amino-acid chain; its full sequence is Aminotransferase FGSG_00049 (382 aa).

Arg80 contacts pyridoxal 5'-phosphate. The residue at position 181 (Lys181) is an N6-(pyridoxal phosphate)lysine. Glu217 contacts pyridoxal 5'-phosphate.

The protein belongs to the class-IV pyridoxal-phosphate-dependent aminotransferase family. Pyridoxal 5'-phosphate is required as a cofactor.

Its pathway is mycotoxin biosynthesis. Functionally, aminotransferase; part of the gene cluster that mediates the biosynthesis of gramillins A and B, bicyclic lipopeptides that induce cell death in maize leaves but not in wheat leaves. The nonribosomal peptide synthetase GRA1 incorporates respectively a glutamic adic (Glu), a leucine (Leu), a serine (Ser), a hydroxyglutamine (HOGln), a 2-amino decanoic acid, and 2 cysteins (CysB and CysA). The biosynthesis of 2-amino decanoic acid incorporated in gramillins could be initiated by a fatty acid synthase composed of the alpha and beta subunits FGSG_00036 and FGSG_11656. The cytochrome P450 monooxygenase FGSG_15680 could hydroxylate the fatty acid chain. Subsequent oxidation to the ketone by the oxidoreductase FGSG_00048 and transamination by aminotransferase FGSG_00049 could form 2-amino-decanoic acid. On the other hand, FGSG_15680 could also be responsible for the HO-modified glutamine at the gamma-position. Whether hydroxylation occurs on the fully assembled product or on the Gln residue prior to assembly into the gramillins requires further proof. The thioredoxin FGSG_00043 could also be required for the disulfide-bond formation between CysA and CysB. The specific involvement of the remaining proteins from the cluster is more difficult to discern, but could have broader regulatory (FGSG_00040 and FGSG_11657) or enzymatic functions (FGSG_00044 and FGSG_00045). The final C-domain of GRA1 does not possess the expected sequence of a termination CT domain, often implicated in macrocyclization and release of a cyclopeptidein fungal NRPs; and the thioesterase FGSG_00047 may act in concert with the terminal C-domain of GRA1 to catalyze the formation of the macrocyclic anhydride and release of the products. The protein is Aminotransferase FGSG_00049 of Gibberella zeae (strain ATCC MYA-4620 / CBS 123657 / FGSC 9075 / NRRL 31084 / PH-1) (Wheat head blight fungus).